The following is a 108-amino-acid chain: UPF0102 protein Sputcn32_3693 (108 aa).

Belongs to the UPF0102 family.

In Shewanella putrefaciens (strain CN-32 / ATCC BAA-453), this protein is UPF0102 protein Sputcn32_3693.